Consider the following 152-residue polypeptide: Transcriptional regulator MraZ (152 aa).

SpoVT-AbrB domains are found at residues 5-52 (ATMV…TLPA) and 81-124 (ASEC…DEQT).

The protein belongs to the MraZ family. As to quaternary structure, forms oligomers.

Its subcellular location is the cytoplasm. It is found in the nucleoid. Functionally, negatively regulates its own expression and that of the subsequent genes in the proximal part of the division and cell wall (dcw) gene cluster. Acts by binding directly to DNA. May also regulate the expression of genes outside the dcw cluster. This is Transcriptional regulator MraZ from Yersinia enterocolitica serotype O:8 / biotype 1B (strain NCTC 13174 / 8081).